A 496-amino-acid polypeptide reads, in one-letter code: Acyltransferase clz6 (496 aa).

The active-site Proton acceptor is the His163.

The protein belongs to the plant acyltransferase family. In terms of assembly, monomer.

It functions in the pathway secondary metabolite biosynthesis. Functionally, acyltransferase; part of the gene cluster that mediates the biosynthesis of squalestatin S1 (SQS1, also known as zaragozic acid A), a heavily oxidized fungal polyketide that offers potent cholesterol lowering activity by targeting squalene synthase (SS). SQS1 is composed of a 2,8-dioxobicyclic[3.2.1]octane-3,4,5-tricarboxyclic acid core that is connected to two lipophilic polyketide arms. These initial steps feature the priming of an unusual benzoic acid starter unit onto the highly reducing polyketide synthase clz14, followed by oxaloacetate extension and product release to generate a tricarboxylic acid containing product. The phenylalanine ammonia lyase (PAL) clz10 and the acyl-CoA ligase clz12 are involved in transforming phenylalanine into benzoyl-CoA. The citrate synthase-like protein clz17 is involved in connecting the C-alpha-carbons of the hexaketide chain and oxaloacetate to afford the tricarboxylic acid unit. The potential hydrolytic enzymes, clz11 and clz13, are in close proximity to pks2 and may participate in product release. On the other side, the tetraketide arm is synthesized by a the squalestatin tetraketide synthase clz2 and enzymatically esterified to the core in the last biosynthetic step, by the acetyltransferase clz6. The biosynthesis of the tetraketide must involve 3 rounds of chain extension. After the first and second rounds methyl-transfer occurs, and in all rounds of extension the ketoreductase and dehydratase are active. The enoyl reductase and C-MeT of clz2 are not active in the final round of extension. The acetyltransferase clz6 appears to have a broad substrate selectivity for its acyl CoA substrate, allowing the in vitro synthesis of novel squalestatins. The biosynthesis of SQS1 requires several oxidative steps likely performed by oxidoreductases clz3, clz15 and clz16. Finally, in support of the identification of the cluster as being responsible for SQS1 production, the cluster contains a gene encoding a putative squalene synthase (SS) clz20, suggesting a likely mechanism for self-resistance. This is Acyltransferase clz6 from Cochliobolus lunatus (Filamentous fungus).